The primary structure comprises 180 residues: MAARLREHYQTKTVPALTKEFSYKNVMAVPKLEKITINIGMGEATQNAKLMDGAVNELGQIAGQKPVITKATKSIAQFKLREGQAIGCMVTLRGDRMFEFFDRLVNVALPRVRDFRGVSSKSFDGRGNYTLGIKDQLIFPEIDYSKVDKTKGMNICITTTARTDAEGLALLRTMGMPFRQ.

The protein belongs to the universal ribosomal protein uL5 family. As to quaternary structure, part of the 50S ribosomal subunit; part of the 5S rRNA/L5/L18/L25 subcomplex. Contacts the 5S rRNA and the P site tRNA. Forms a bridge to the 30S subunit in the 70S ribosome.

In terms of biological role, this is one of the proteins that bind and probably mediate the attachment of the 5S RNA into the large ribosomal subunit, where it forms part of the central protuberance. In the 70S ribosome it contacts protein S13 of the 30S subunit (bridge B1b), connecting the 2 subunits; this bridge is implicated in subunit movement. Contacts the P site tRNA; the 5S rRNA and some of its associated proteins might help stabilize positioning of ribosome-bound tRNAs. This chain is Large ribosomal subunit protein uL5, found in Solibacter usitatus (strain Ellin6076).